Here is a 1746-residue protein sequence, read N- to C-terminus: tRNA (32-2'-O)-methyltransferase regulator THADA (1746 aa).

Residues 1252–1286 (EQALAEIRRIVVELKALQLRLKNTEAANTKLNTNV) are a coiled coil.

This sequence belongs to the THADA family. As to quaternary structure, interacts with SERCA. In terms of tissue distribution, detected in the larval fat body, salivary glands and wing imaginal disks (at protein level).

The protein resides in the endoplasmic reticulum. In terms of biological role, together with methyltransferase Trm7-32, methylates the 2'-O-ribose of nucleotides at position 32 of the anticodon loop of substrate tRNAs. Plays a key role in energy homeostasis by regulating the balance between energy storage and heat production. Functions by negatively regulating Ca(2+) signaling pathways that are involved in heat production and maintaining correct lipid storage in the fat body. Regulates Ca(2+) signaling pathways by reducing the activity of the calcium-transporting ATPase SERCA possibly by promoting uncoupling of SERCA ATP hydrolysis from calcium pumping. May also function in the nervous system to control feeding behavior. This Drosophila melanogaster (Fruit fly) protein is tRNA (32-2'-O)-methyltransferase regulator THADA.